Here is a 144-residue protein sequence, read N- to C-terminus: RxLR effector protein PITG_03192 (144 aa).

Residues 1–24 (MRVGFVFALLVVSVIVCFNGLTSA) form the signal peptide. The short motif at 49–58 (RNLRASGEER) is the RxLR-dEER element. An N-linked (GlcNAc...) asparagine glycan is attached at N115. Residues 122-142 (FFILATLVMFPIGVWAVVTNY) traverse the membrane as a helical segment.

It belongs to the RxLR effector family. Interacts with the C-terminal portions the ER-associated potato NAC transcription factors NTP1 and NTP2.

The protein localises to the secreted. It localises to the host endoplasmic reticulum membrane. Functionally, effector that is required for full virulence. Targets host NTP1 and NTP2 transcription factors and prevents their pathogen-associated molecular pattern (PAMP)-triggered re-localization from the endoplasmic reticulum into the nucleus, where they contribute to prevent disease progression by P.infestans. The sequence is that of RxLR effector protein PITG_03192 from Phytophthora infestans (strain T30-4) (Potato late blight agent).